A 314-amino-acid polypeptide reads, in one-letter code: ATP synthase gamma chain (314 aa).

Belongs to the ATPase gamma chain family. As to quaternary structure, F-type ATPases have 2 components, CF(1) - the catalytic core - and CF(0) - the membrane proton channel. CF(1) has five subunits: alpha(3), beta(3), gamma(1), delta(1), epsilon(1). CF(0) has three main subunits: a, b and c.

The protein localises to the cell membrane. In terms of biological role, produces ATP from ADP in the presence of a proton gradient across the membrane. The gamma chain is believed to be important in regulating ATPase activity and the flow of protons through the CF(0) complex. The polypeptide is ATP synthase gamma chain (Limosilactobacillus reuteri (strain DSM 20016) (Lactobacillus reuteri)).